Consider the following 214-residue polypeptide: Dephospho-CoA kinase (214 aa).

One can recognise a DPCK domain in the interval 4–204 (IVGLTGGIGS…QRYLQLAQQK (201 aa)). Residue 12-17 (GSGKST) participates in ATP binding.

Belongs to the CoaE family.

It is found in the cytoplasm. It carries out the reaction 3'-dephospho-CoA + ATP = ADP + CoA + H(+). It functions in the pathway cofactor biosynthesis; coenzyme A biosynthesis; CoA from (R)-pantothenate: step 5/5. Functionally, catalyzes the phosphorylation of the 3'-hydroxyl group of dephosphocoenzyme A to form coenzyme A. In Mannheimia succiniciproducens (strain KCTC 0769BP / MBEL55E), this protein is Dephospho-CoA kinase.